A 940-amino-acid chain; its full sequence is Isoleucine--tRNA ligase (940 aa).

The short motif at 58-68 (PYANGSIHIGH) is the 'HIGH' region element. E563 is an L-isoleucyl-5'-AMP binding site. Positions 604-608 (KMSKS) match the 'KMSKS' region motif. Residue K607 coordinates ATP. Zn(2+)-binding residues include C902, C905, C922, and C925.

The protein belongs to the class-I aminoacyl-tRNA synthetase family. IleS type 1 subfamily. As to quaternary structure, monomer. The cofactor is Zn(2+).

Its subcellular location is the cytoplasm. The enzyme catalyses tRNA(Ile) + L-isoleucine + ATP = L-isoleucyl-tRNA(Ile) + AMP + diphosphate. In terms of biological role, catalyzes the attachment of isoleucine to tRNA(Ile). As IleRS can inadvertently accommodate and process structurally similar amino acids such as valine, to avoid such errors it has two additional distinct tRNA(Ile)-dependent editing activities. One activity is designated as 'pretransfer' editing and involves the hydrolysis of activated Val-AMP. The other activity is designated 'posttransfer' editing and involves deacylation of mischarged Val-tRNA(Ile). This Marinomonas sp. (strain MWYL1) protein is Isoleucine--tRNA ligase.